Here is a 271-residue protein sequence, read N- to C-terminus: 3-methyl-2-oxobutanoate hydroxymethyltransferase (271 aa).

The Mg(2+) site is built by Asp-52 and Asp-91. 3-methyl-2-oxobutanoate contacts are provided by residues 52 to 53 (DS), Asp-91, and Lys-121. Glu-123 contacts Mg(2+). Catalysis depends on Glu-189, which acts as the Proton acceptor.

Belongs to the PanB family. As to quaternary structure, homodecamer; pentamer of dimers. The cofactor is Mg(2+).

The protein localises to the cytoplasm. The catalysed reaction is 3-methyl-2-oxobutanoate + (6R)-5,10-methylene-5,6,7,8-tetrahydrofolate + H2O = 2-dehydropantoate + (6S)-5,6,7,8-tetrahydrofolate. It participates in cofactor biosynthesis; (R)-pantothenate biosynthesis; (R)-pantoate from 3-methyl-2-oxobutanoate: step 1/2. In terms of biological role, catalyzes the reversible reaction in which hydroxymethyl group from 5,10-methylenetetrahydrofolate is transferred onto alpha-ketoisovalerate to form ketopantoate. This chain is 3-methyl-2-oxobutanoate hydroxymethyltransferase, found in Acidothermus cellulolyticus (strain ATCC 43068 / DSM 8971 / 11B).